Here is a 333-residue protein sequence, read N- to C-terminus: Foldase protein PrsA (333 aa).

The first 19 residues, 1–19 (MKKRHLLIAGLACMTILGA), serve as a signal peptide directing secretion. A lipid anchor (N-palmitoyl cysteine) is attached at cysteine 20. The S-diacylglycerol cysteine moiety is linked to residue cysteine 20. A PpiC domain is found at 155 to 245 (LIEVEASHIL…YGYHIILVTD (91 aa)). The disordered stretch occupies residues 291 to 333 (GLFDLPDAPPVEDTPEIDGEDASDEAEDQAEDADENAEEEDES). The span at 303-333 (DTPEIDGEDASDEAEDQAEDADENAEEEDES) shows a compositional bias: acidic residues.

It belongs to the PrsA family.

The protein resides in the cell membrane. It catalyses the reaction [protein]-peptidylproline (omega=180) = [protein]-peptidylproline (omega=0). Plays a major role in protein secretion by helping the post-translocational extracellular folding of several secreted proteins. The sequence is that of Foldase protein PrsA from Halalkalibacterium halodurans (strain ATCC BAA-125 / DSM 18197 / FERM 7344 / JCM 9153 / C-125) (Bacillus halodurans).